The sequence spans 423 residues: Histidine--tRNA ligase (423 aa).

This sequence belongs to the class-II aminoacyl-tRNA synthetase family. Homodimer.

It is found in the cytoplasm. The enzyme catalyses tRNA(His) + L-histidine + ATP = L-histidyl-tRNA(His) + AMP + diphosphate + H(+). The polypeptide is Histidine--tRNA ligase (Orientia tsutsugamushi (strain Boryong) (Rickettsia tsutsugamushi)).